A 657-amino-acid chain; its full sequence is Protein kinase and PP2C-like domain-containing protein (657 aa).

The Protein kinase domain maps to 32–327; sequence FSLLSPIAKG…LKIIEKHIAV (296 aa). ATP contacts are provided by residues 38–46 and K59; that span reads IAKGSESTV. D156 serves as the catalytic Proton acceptor; for kinase activity. The region spanning 390-647 is the PPM-type phosphatase domain; that stretch reads SWGSFATCGR…DNITVIVVFL (258 aa). The Mn(2+) site is built by D426, G427, D598, and D638.

It in the N-terminal section; belongs to the protein kinase superfamily. Ser/Thr protein kinase family. The protein in the C-terminal section; belongs to the PP2C family. The cofactor is Mg(2+). Requires Mn(2+) as cofactor.

The enzyme catalyses L-seryl-[protein] + ATP = O-phospho-L-seryl-[protein] + ADP + H(+). It carries out the reaction L-threonyl-[protein] + ATP = O-phospho-L-threonyl-[protein] + ADP + H(+). It catalyses the reaction O-phospho-L-seryl-[protein] + H2O = L-seryl-[protein] + phosphate. The catalysed reaction is O-phospho-L-threonyl-[protein] + H2O = L-threonyl-[protein] + phosphate. The polypeptide is Protein kinase and PP2C-like domain-containing protein (Oryza sativa subsp. japonica (Rice)).